We begin with the raw amino-acid sequence, 394 residues long: Nuclear hormone receptor family member nhr-103 (394 aa).

The nuclear receptor DNA-binding region spans 8 to 83 (SGPCEICGQK…VGMDSKKFQT (76 aa)). The NR C4-type zinc-finger motif lies at 11 to 31 (CEICGQKTSGRHFGVLSCRSC). The segment at 47-66 (QCVKGTCKIFEDGKFNCKQC) adopts an NR C4-type; degenerate zinc-finger fold. The 269-residue stretch at 126–394 (YLVDMAKNLL…FSHPEMFETT (269 aa)) folds into the NR LBD domain.

Belongs to the nuclear hormone receptor family.

The protein localises to the nucleus. Its function is as follows. Orphan nuclear receptor. The sequence is that of Nuclear hormone receptor family member nhr-103 (nhr-103) from Caenorhabditis elegans.